The sequence spans 802 residues: MFELKKGALFVDEMKNVSIRIGKVVEEEEEVWEEAGPTPKPGILELRKWDHKLLERYEPFYAPMQDFCNLCTMGPCDLSMNKRGACGIDLKTAKARLVTIACCIGASAHTAHARHLVDHLIEEFGEDFPIDLGGDVNVEAPIIRTVVGIKPKTLGDLREALNWAEKEIVKVLHSTHIGNEESLLDYESKAMHVSMADHVGMEVADIAQIVAYNFPKAEPDTPLVDTGFGIVDKSKPTIVVVGHNVMYARPVADYLEEMGRIDDFELAGLCCTAHDMTRYNAKAKIFGPISYQLRVIRAGIPDVMISDEQCIRADLLEACKKMGIPLIATSDAAARGLPDVSDWPVEKIVDALVSGKLPGVFLPIPEKVGQVAPLVAEAIFKKHGGERKYKFFESDEALMEEINKCTQCMNCVFTCPHSLRVDQGMAHAQKTGDLSKLAQLEEQCLACMKCEQACPKNIKIINVIMRANYDRLYNKTGKTRVGRGPIQDTEIRKVGQPIVFGQIPGVIAAVGCINFPDEMKSIREILEEFLKRRYIVVTSGCHAMDIGMIKDEEGKTLYEKYPGNFDAGGLVNTGSCVANSHIAGAAIKIANIFAMRPLRGNYAEIADYVLNRVGAVGFSWGPYSHKAASIATGFNRLGVPVVVGPHGTKYRRAYIGKPWKKDKWWVYDIKSRQKVFIEPAPDSLLVAVETKEEAIVQLARLCIRPNDTNQGRQIKLTHYIELHQKYYGDLPDDWAVYVRSEADLPLKMRDQLLKVLEEQYGWKIDWDKKKIVEGPVRHFDAGFNPTIVEEVYEKYAGEKAPR.

Cys-68, Cys-71, Cys-76, and Cys-86 together coordinate [4Fe-4S] cluster. His-109 is a CO binding site. Residues His-243, Cys-271, and Cys-310 each contribute to the [Ni-4Fe-4S] cluster site. 2 consecutive 4Fe-4S ferredoxin-type domains span residues 395–424 (DEAL…VDQG) and 435–464 (SKLA…INVI). Residues Cys-405, Cys-408, Cys-411, Cys-415, Cys-444, Cys-447, Cys-450, and Cys-454 each coordinate [4Fe-4S] cluster. Positions 512, 541, and 576 each coordinate [Ni-4Fe-4S] cluster.

This sequence belongs to the Ni-containing carbon monoxide dehydrogenase family. As to quaternary structure, heterotetramer of two alpha and two epsilon subunits. The ACDS complex is made up of alpha, epsilon, beta, gamma and delta subunits with a probable stoichiometry of (alpha(2)epsilon(2))(4)-beta(8)-(gamma(1)delta(1))(8). It depends on [4Fe-4S] cluster as a cofactor. [Ni-4Fe-4S] cluster serves as cofactor.

It carries out the reaction CO + 2 oxidized [2Fe-2S]-[ferredoxin] + H2O = 2 reduced [2Fe-2S]-[ferredoxin] + CO2 + 2 H(+). Its function is as follows. Part of the ACDS complex that catalyzes the reversible cleavage of acetyl-CoA, allowing autotrophic growth from CO(2). The alpha-epsilon subcomponent functions as a carbon monoxide dehydrogenase. This chain is Acetyl-CoA decarbonylase/synthase complex subunit alpha 1, found in Archaeoglobus fulgidus (strain ATCC 49558 / DSM 4304 / JCM 9628 / NBRC 100126 / VC-16).